The following is a 217-amino-acid chain: MLDESLEPGWLSEEVKTGTTIIAIEFDGGVVLGSDSRVSAGETVVNRVMNKLSLLHDKIYCALSGSAADAQTIAEMVNYQLDVHSIEVGEDPQVRSAATLVKNISYKYKEDLSAHLIVAGWDKRGGGQVYVTLNGLLSRQPFAVGGSGSSYVYGFVDAEYRKAMSKEDCQQFVVNTLSLAMSRDGSSGGVAYLVTIDEKGAEEKCILGNELPTFYDQ.

Residues 1-18 (MLDESLEPGWLSEEVKTG) constitute a propeptide, removed in mature form. Thr19 (nucleophile) is an active-site residue.

It belongs to the peptidase T1B family. The 26S proteasome consists of a 20S proteasome core and two 19S regulatory subunits. The 20S proteasome core is composed of 28 subunits that are arranged in four stacked rings, resulting in a barrel-shaped structure. The two end rings are each formed by seven alpha subunits, and the two central rings are each formed by seven beta subunits. The catalytic chamber with the active sites is on the inside of the barrel. Component of the immunoproteasome, where it displaces the equivalent housekeeping subunit PSMB6. Post-translationally, autocleaved. The resulting N-terminal Thr residue of the mature subunit is responsible for the nucleophile proteolytic activity.

The protein resides in the cytoplasm. Its subcellular location is the nucleus. The catalysed reaction is Cleavage of peptide bonds with very broad specificity.. Functionally, the proteasome is a multicatalytic proteinase complex which is characterized by its ability to cleave peptides with Arg, Phe, Tyr, Leu, and Glu adjacent to the leaving group at neutral or slightly basic pH. The proteasome has an ATP-dependent proteolytic activity. This subunit is involved in antigen processing to generate class I binding peptides. This is Proteasome subunit beta type-9 (psmb9) from Oncorhynchus mykiss (Rainbow trout).